The following is a 198-amino-acid chain: Synaptobrevin homolog YKT6-B (198 aa).

The Longin domain maps to 8-127 (VLYKGENKVH…IQYNALDSYL (120 aa)). A v-SNARE coiled-coil homology domain is found at 138–198 (PMSKVQAELD…RKQNSCCDIM (61 aa)). Residue Cys194 is the site of S-palmitoyl cysteine attachment. The residue at position 195 (Cys195) is a Cysteine methyl ester. The S-farnesyl cysteine moiety is linked to residue Cys195. The propeptide at 196–198 (DIM) is removed in mature form.

It belongs to the synaptobrevin family. In terms of processing, palmitoylated; catalyzes its own palmitoylation. Palmitoylation is required for Golgi targeting. Post-translationally, farnesylation is required for Golgi targeting.

It localises to the cytoplasm. The protein localises to the cytosol. Its subcellular location is the cytoplasmic vesicle membrane. It is found in the golgi apparatus membrane. Vesicular soluble NSF attachment protein receptor (v-SNARE) mediating vesicle docking and fusion to a specific acceptor cellular compartment. Functions in endoplasmic reticulum to Golgi transport; as part of a SNARE complex composed of GOSR1, GOSR2 and STX5. Functions in early/recycling endosome to TGN transport; as part of a SNARE complex composed of BET1L, GOSR1 and STX5. Has a S-palmitoyl transferase activity. In Xenopus laevis (African clawed frog), this protein is Synaptobrevin homolog YKT6-B (ykt6-b).